The primary structure comprises 291 residues: Translocon-associated protein subunit alpha (291 aa).

Positions 1–20 are cleaved as a signal peptide; the sequence is MRLLPRLLLLLLLVFPATVL. Residues 21 to 207 are Lumenal-facing; the sequence is FRGGPRGSLA…EREDGLDGET (187 aa). The disordered stretch occupies residues 34 to 83; that stretch reads DLTEDEETVEDSIIEDEDDEAEVEEDEPTDLVEDKEEEDVSGEPEASPSA. Over residues 35–75 the composition is skewed to acidic residues; sequence LTEDEETVEDSIIEDEDDEAEVEEDEPTDLVEDKEEEDVSG. Residues Asn-136 and Asn-191 are each glycosylated (N-linked (GlcNAc...) asparagine). A helical transmembrane segment spans residues 208–228; that stretch reads IFMYMFLAGLGLLVIVGLHQL. Residues 229–291 are Cytoplasmic-facing; sequence LESRKRKRPV…AQKRSVGSDE (63 aa). At Ser-247 the chain carries Phosphoserine. Position 260 is a phosphothreonine (Thr-260). Residues 263–291 are disordered; the sequence is QIMQSRRDKASPRRLPRKRAQKRSVGSDE. Residue Ser-273 is modified to Phosphoserine. Over residues 274-284 the composition is skewed to basic residues; that stretch reads PRRLPRKRAQK.

Belongs to the TRAP-alpha family. As to quaternary structure, heterotetramer of TRAP-alpha, TRAP-beta, TRAP-delta and TRAP-gamma. Interacts with palmitoylated calnexin (CALX), the interaction is required for efficient folding of glycosylated proteins. Post-translationally, phosphorylated in its cytoplasmic tail.

The protein localises to the endoplasmic reticulum membrane. In terms of biological role, TRAP proteins are part of a complex whose function is to bind calcium to the ER membrane and thereby regulate the retention of ER resident proteins. May be involved in the recycling of the translocation apparatus after completion of the translocation process or may function as a membrane-bound chaperone facilitating folding of translocated proteins. The chain is Translocon-associated protein subunit alpha (SSR1) from Pongo abelii (Sumatran orangutan).